Reading from the N-terminus, the 107-residue chain is Iron-sulfur cluster assembly protein CyaY (107 aa).

Belongs to the frataxin family.

In terms of biological role, involved in iron-sulfur (Fe-S) cluster assembly. May act as a regulator of Fe-S biogenesis. The chain is Iron-sulfur cluster assembly protein CyaY from Neisseria gonorrhoeae (strain ATCC 700825 / FA 1090).